Here is a 274-residue protein sequence, read N- to C-terminus: 3-methyl-2-oxobutanoate hydroxymethyltransferase (274 aa).

D50 and D89 together coordinate Mg(2+). Residues 50 to 51 (DS), D89, and K119 each bind 3-methyl-2-oxobutanoate. E121 contributes to the Mg(2+) binding site. The active-site Proton acceptor is E188.

Belongs to the PanB family. In terms of assembly, homodecamer; pentamer of dimers. Mg(2+) serves as cofactor.

The protein resides in the cytoplasm. The enzyme catalyses 3-methyl-2-oxobutanoate + (6R)-5,10-methylene-5,6,7,8-tetrahydrofolate + H2O = 2-dehydropantoate + (6S)-5,6,7,8-tetrahydrofolate. It functions in the pathway cofactor biosynthesis; (R)-pantothenate biosynthesis; (R)-pantoate from 3-methyl-2-oxobutanoate: step 1/2. Functionally, catalyzes the reversible reaction in which hydroxymethyl group from 5,10-methylenetetrahydrofolate is transferred onto alpha-ketoisovalerate to form ketopantoate. This Methylorubrum populi (strain ATCC BAA-705 / NCIMB 13946 / BJ001) (Methylobacterium populi) protein is 3-methyl-2-oxobutanoate hydroxymethyltransferase.